The primary structure comprises 325 residues: Delta(1)-pyrroline-2-carboxylate reductase (325 aa).

This sequence belongs to the ornithine cyclodeaminase/mu-crystallin family.

The enzyme catalyses L-proline + NAD(+) = 1-pyrroline-2-carboxylate + NADH + H(+). It catalyses the reaction L-proline + NADP(+) = 1-pyrroline-2-carboxylate + NADPH + H(+). Its function is as follows. Catalyzes the reduction of Delta(1)-pyrroline-2-carboxylate (Pyr2C) to L-proline, using preferentially NADPH over NADH as the electron donor. Is likely involved in a degradation pathway that converts trans-3-hydroxy-L-proline (t3LHyp) to L-proline, which allows B.cereus to grow on t3LHyp as a sole carbon source. This Bacillus cereus (strain ATCC 14579 / DSM 31 / CCUG 7414 / JCM 2152 / NBRC 15305 / NCIMB 9373 / NCTC 2599 / NRRL B-3711) protein is Delta(1)-pyrroline-2-carboxylate reductase.